Reading from the N-terminus, the 318-residue chain is MAAAASNGNGMEVDVAALPSVMAQGVTGSVTVALHPLVILNISDHWIRMRSQEGRPMQVIGALIGKQEGRNIEVMNSFELLSQINDEKITINKEYYYTKEEQFKQVFKDMEFLGWYTTGGTPDPSDIHVHKQVCEIIESPLFLKLNPMTKHTDLPVSVYESVIDIVNGEATMLLAELSYTLATEEAERIGVDHVARMTATGSGENSTVAEHLIAQHSAIKMLHSRVRLILEYVRAAEGGEVPFNHEILREASALCHCLPVLSTDKFKTDFYDQCNDVGLMSYLGTITKTCNTMNQFVNKFNILYDRQGIGRRMRGLFF.

The region spanning 32-165 is the MPN domain; it reads VALHPLVILN…VSVYESVIDI (134 aa).

The protein belongs to the peptidase M67A family. CSN6 subfamily. Component of the CSN complex, probably composed of cops1, cops2, cops3, cops4, cops5, cops6, cops7, cops8 and cops9.

The protein resides in the cytoplasm. It is found in the nucleus. In terms of biological role, component of the COP9 signalosome complex (CSN), a complex involved in various cellular and developmental processes. The CSN complex is an essential regulator of the ubiquitin (Ubl) conjugation pathway by mediating the deneddylation of the cullin subunits of E3 ligase complexes, leading to modify the Ubl ligase activity. In Xenopus laevis (African clawed frog), this protein is COP9 signalosome complex subunit 6 (cops6).